A 1142-amino-acid polypeptide reads, in one-letter code: Nucleoporin nup131 (1142 aa).

The protein belongs to the nucleoporin Nup133 family. In terms of assembly, component of the npc107-120 complex which consists of nup85, nup107, nup120, nup131, nup132 and seh1. Interacts with nup107.

It localises to the nucleus. Its function is as follows. Functions as a component of the nuclear pore complex (NPC). NPC components, collectively referred to as nucleoporins (NUPs), can play the role of both NPC structural components and of docking or interaction partners for transiently associated nuclear transport factors. Active directional transport is assured by both, a Phe-Gly (FG) repeat affinity gradient for these transport factors across the NPC and a transport cofactor concentration gradient across the nuclear envelope. The protein is Nucleoporin nup131 (nup131) of Schizosaccharomyces pombe (strain 972 / ATCC 24843) (Fission yeast).